The primary structure comprises 303 residues: UDP-3-O-acyl-N-acetylglucosamine deacetylase (303 aa).

Positions 78, 237, and 241 each coordinate Zn(2+). The active-site Proton donor is His264.

The protein belongs to the LpxC family. It depends on Zn(2+) as a cofactor.

It catalyses the reaction a UDP-3-O-[(3R)-3-hydroxyacyl]-N-acetyl-alpha-D-glucosamine + H2O = a UDP-3-O-[(3R)-3-hydroxyacyl]-alpha-D-glucosamine + acetate. It participates in glycolipid biosynthesis; lipid IV(A) biosynthesis; lipid IV(A) from (3R)-3-hydroxytetradecanoyl-[acyl-carrier-protein] and UDP-N-acetyl-alpha-D-glucosamine: step 2/6. Functionally, catalyzes the hydrolysis of UDP-3-O-myristoyl-N-acetylglucosamine to form UDP-3-O-myristoylglucosamine and acetate, the committed step in lipid A biosynthesis. The chain is UDP-3-O-acyl-N-acetylglucosamine deacetylase from Pseudomonas entomophila (strain L48).